The sequence spans 241 residues: Carboxy-S-adenosyl-L-methionine synthase (241 aa).

S-adenosyl-L-methionine-binding positions include Tyr-38, 63–65 (GCS), 88–89 (DN), 116–117 (DI), Asn-131, and Arg-198.

It belongs to the class I-like SAM-binding methyltransferase superfamily. Cx-SAM synthase family. Homodimer.

It catalyses the reaction prephenate + S-adenosyl-L-methionine = carboxy-S-adenosyl-L-methionine + 3-phenylpyruvate + H2O. Its function is as follows. Catalyzes the conversion of S-adenosyl-L-methionine (SAM) to carboxy-S-adenosyl-L-methionine (Cx-SAM). This Glaesserella parasuis serovar 5 (strain SH0165) (Haemophilus parasuis) protein is Carboxy-S-adenosyl-L-methionine synthase.